We begin with the raw amino-acid sequence, 139 residues long: Large ribosomal subunit protein bL17 (139 aa).

It belongs to the bacterial ribosomal protein bL17 family. Part of the 50S ribosomal subunit. Contacts protein L32.

The protein is Large ribosomal subunit protein bL17 of Afipia carboxidovorans (strain ATCC 49405 / DSM 1227 / KCTC 32145 / OM5) (Oligotropha carboxidovorans).